The sequence spans 172 residues: NADH-quinone oxidoreductase subunit B (172 aa).

C46, C47, C111, and C141 together coordinate [4Fe-4S] cluster.

It belongs to the complex I 20 kDa subunit family. NDH-1 is composed of 14 different subunits. Subunits NuoB, C, D, E, F, and G constitute the peripheral sector of the complex. It depends on [4Fe-4S] cluster as a cofactor.

Its subcellular location is the cell membrane. It carries out the reaction a quinone + NADH + 5 H(+)(in) = a quinol + NAD(+) + 4 H(+)(out). Functionally, NDH-1 shuttles electrons from NADH, via FMN and iron-sulfur (Fe-S) centers, to quinones in the respiratory chain. The immediate electron acceptor for the enzyme in this species is believed to be a menaquinone. Couples the redox reaction to proton translocation (for every two electrons transferred, four hydrogen ions are translocated across the cytoplasmic membrane), and thus conserves the redox energy in a proton gradient. This chain is NADH-quinone oxidoreductase subunit B, found in Bacillus cereus (strain G9842).